Here is a 208-residue protein sequence, read N- to C-terminus: Small ribosomal subunit protein eS8 (208 aa).

Residues 1–27 (MGISRDNWHKRRRTGGKRKPVHKKRKY) are disordered. Residues 8–26 (WHKRRRTGGKRKPVHKKRK) show a composition bias toward basic residues.

It belongs to the eukaryotic ribosomal protein eS8 family. As to quaternary structure, component of the small ribosomal subunit. Identified in a IGF2BP1-dependent mRNP granule complex containing untranslated mRNAs. Part of the small subunit (SSU) processome, composed of more than 70 proteins and the RNA chaperone small nucleolar RNA (snoRNA) U3.

The protein resides in the cytoplasm. It localises to the membrane. Its subcellular location is the nucleus. The protein localises to the nucleolus. Its function is as follows. Component of the small ribosomal subunit. The ribosome is a large ribonucleoprotein complex responsible for the synthesis of proteins in the cell. Part of the small subunit (SSU) processome, first precursor of the small eukaryotic ribosomal subunit. During the assembly of the SSU processome in the nucleolus, many ribosome biogenesis factors, an RNA chaperone and ribosomal proteins associate with the nascent pre-rRNA and work in concert to generate RNA folding, modifications, rearrangements and cleavage as well as targeted degradation of pre-ribosomal RNA by the RNA exosome. The polypeptide is Small ribosomal subunit protein eS8 (rps8) (Danio rerio (Zebrafish)).